The chain runs to 1241 residues: ATP-dependent helicase/nuclease subunit A (1241 aa).

The 474-residue stretch at 12-485 (SQWTDDQWKA…IDLAKNFRSR (474 aa)) folds into the UvrD-like helicase ATP-binding domain. Residue 33–40 (AAAGSGKT) coordinates ATP. The UvrD-like helicase C-terminal domain maps to 505–805 (GEIDYDADAE…RIMTIHKSKG (301 aa)).

It belongs to the helicase family. AddA subfamily. In terms of assembly, heterodimer of AddA and AddB/RexB. Requires Mg(2+) as cofactor.

The catalysed reaction is Couples ATP hydrolysis with the unwinding of duplex DNA by translocating in the 3'-5' direction.. It carries out the reaction ATP + H2O = ADP + phosphate + H(+). In terms of biological role, the heterodimer acts as both an ATP-dependent DNA helicase and an ATP-dependent, dual-direction single-stranded exonuclease. Recognizes the chi site generating a DNA molecule suitable for the initiation of homologous recombination. The AddA nuclease domain is required for chi fragment generation; this subunit has the helicase and 3' -&gt; 5' nuclease activities. The chain is ATP-dependent helicase/nuclease subunit A from Bacillus cereus (strain ATCC 14579 / DSM 31 / CCUG 7414 / JCM 2152 / NBRC 15305 / NCIMB 9373 / NCTC 2599 / NRRL B-3711).